A 539-amino-acid polypeptide reads, in one-letter code: Alpha-aminoadipic semialdehyde dehydrogenase (539 aa).

A mitochondrion-targeting transit peptide spans 1–26 (MLRLARPLCVQTVKASKLSRLWSRPA). N6-acetyllysine; alternate is present on residues Lys86, Lys94, and Lys97. N6-succinyllysine; alternate occurs at positions 86, 94, and 97. Residues 192 to 194 (TAF), Lys218, 258 to 259 (GT), 274 to 275 (GS), 274 to 279 (GSTQVG), and 296 to 297 (EL) contribute to the NAD(+) site. Residue Glu296 is the Proton acceptor of the active site. The active-site Nucleophile is Cys330. Thr331 contributes to the (S)-2-amino-6-oxohexanoate binding site. Glu427 is an NAD(+) binding site. The residue at position 462 (Lys462) is an N6-acetyllysine. 2 residues coordinate (S)-2-amino-6-oxohexanoate: Gly489 and Ala490. Lys500 is subject to N6-acetyllysine. Lys537 bears the N6-succinyllysine mark.

Belongs to the aldehyde dehydrogenase family. In terms of assembly, homotetramer. As to expression, abundant in kidney, liver, cochlea and outer hair cells but not inner hair cells or vestibular type I hair cells. Very low levels in lung, brain, intestine and pancreas.

It localises to the cytoplasm. The protein resides in the cytosol. The protein localises to the nucleus. It is found in the mitochondrion. It catalyses the reaction nonanal + NAD(+) + H2O = nonanoate + NADH + 2 H(+). The catalysed reaction is (S)-2-amino-6-oxohexanoate + NAD(+) + H2O = L-2-aminoadipate + NADH + 2 H(+). The enzyme catalyses betaine aldehyde + NAD(+) + H2O = glycine betaine + NADH + 2 H(+). It carries out the reaction an aldehyde + NAD(+) + H2O = a carboxylate + NADH + 2 H(+). It catalyses the reaction hexanal + NAD(+) + H2O = hexanoate + NADH + 2 H(+). The catalysed reaction is octanal + NAD(+) + H2O = octanoate + NADH + 2 H(+). The enzyme catalyses (E)-non-2-enal + NAD(+) + H2O = (E)-non-2-enoate + NADH + 2 H(+). It carries out the reaction (E)-4-hydroxynon-2-enal + NAD(+) + H2O = (E)-4-hydroxynon-2-enoate + NADH + 2 H(+). It participates in amine and polyamine biosynthesis; betaine biosynthesis via choline pathway; betaine from betaine aldehyde: step 1/1. Functionally, multifunctional enzyme mediating important protective effects. Metabolizes betaine aldehyde to betaine, an important cellular osmolyte and methyl donor. Protects cells from oxidative stress by metabolizing a number of lipid peroxidation-derived aldehydes. Involved in lysine catabolism. In Rattus norvegicus (Rat), this protein is Alpha-aminoadipic semialdehyde dehydrogenase.